The primary structure comprises 459 residues: Bifunctional protein GlmU (459 aa).

Residues 1–229 are pyrophosphorylase; sequence MSNYAIILAA…FDESLGVNDR (229 aa). Residues 8–11, lysine 22, glutamine 72, and 77–78 each bind UDP-N-acetyl-alpha-D-glucosamine; these read LAAG and GT. Residue aspartate 102 coordinates Mg(2+). UDP-N-acetyl-alpha-D-glucosamine contacts are provided by glycine 139, glutamate 154, asparagine 169, and asparagine 227. Asparagine 227 is a binding site for Mg(2+). Residues 230-250 form a linker region; sequence VALATAEKVMRHRIARQHMVN. An N-acetyltransferase region spans residues 251 to 459; the sequence is GVTVVNPDSA…NKKPHHPSQK (209 aa). The UDP-N-acetyl-alpha-D-glucosamine site is built by arginine 332 and lysine 350. The active-site Proton acceptor is the histidine 362. UDP-N-acetyl-alpha-D-glucosamine-binding residues include tyrosine 365 and asparagine 376. Residues alanine 379, 385–386, serine 404, alanine 422, and arginine 439 each bind acetyl-CoA; that span reads NY.

The protein in the N-terminal section; belongs to the N-acetylglucosamine-1-phosphate uridyltransferase family. This sequence in the C-terminal section; belongs to the transferase hexapeptide repeat family. Homotrimer. Mg(2+) serves as cofactor.

It is found in the cytoplasm. The catalysed reaction is alpha-D-glucosamine 1-phosphate + acetyl-CoA = N-acetyl-alpha-D-glucosamine 1-phosphate + CoA + H(+). It carries out the reaction N-acetyl-alpha-D-glucosamine 1-phosphate + UTP + H(+) = UDP-N-acetyl-alpha-D-glucosamine + diphosphate. The protein operates within nucleotide-sugar biosynthesis; UDP-N-acetyl-alpha-D-glucosamine biosynthesis; N-acetyl-alpha-D-glucosamine 1-phosphate from alpha-D-glucosamine 6-phosphate (route II): step 2/2. Its pathway is nucleotide-sugar biosynthesis; UDP-N-acetyl-alpha-D-glucosamine biosynthesis; UDP-N-acetyl-alpha-D-glucosamine from N-acetyl-alpha-D-glucosamine 1-phosphate: step 1/1. It functions in the pathway bacterial outer membrane biogenesis; LPS lipid A biosynthesis. Catalyzes the last two sequential reactions in the de novo biosynthetic pathway for UDP-N-acetylglucosamine (UDP-GlcNAc). The C-terminal domain catalyzes the transfer of acetyl group from acetyl coenzyme A to glucosamine-1-phosphate (GlcN-1-P) to produce N-acetylglucosamine-1-phosphate (GlcNAc-1-P), which is converted into UDP-GlcNAc by the transfer of uridine 5-monophosphate (from uridine 5-triphosphate), a reaction catalyzed by the N-terminal domain. In Streptococcus agalactiae serotype III (strain NEM316), this protein is Bifunctional protein GlmU.